A 369-amino-acid polypeptide reads, in one-letter code: Protein HGH1 homolog (369 aa).

The protein belongs to the HGH1 family.

This Drosophila melanogaster (Fruit fly) protein is Protein HGH1 homolog.